Here is a 517-residue protein sequence, read N- to C-terminus: Cell division cycle protein 73 (517 aa).

Over residues 124–135 the composition is skewed to basic and acidic residues; that stretch reads SEPEAKKPRLDG. Disordered stretches follow at residues 124-159 and 306-326; these read SEPE…SAAK and GHHA…LAKP. Over residues 315–324 the composition is skewed to pro residues; that stretch reads DAPPGRPPLA.

Belongs to the CDC73 family. As to quaternary structure, component of the PAF1 complex which consists of at least cdc-73, ctr-9, leo-1, pafo-1 and rtfo-1.

It is found in the nucleus. Component of the PAF1 complex which is a multifunctional complex involved in transcription initiation via genetic interactions with TATA-binding proteins, elongation and transcription-coupled histone modification. The chain is Cell division cycle protein 73 from Caenorhabditis elegans.